A 37-amino-acid chain; its full sequence is Cytochrome b6-f complex subunit 5 (37 aa).

Residues 5–25 form a helical membrane-spanning segment; that stretch reads FLFGIVLGLIPITLAGLFVTA.

It belongs to the PetG family. As to quaternary structure, the 4 large subunits of the cytochrome b6-f complex are cytochrome b6, subunit IV (17 kDa polypeptide, PetD), cytochrome f and the Rieske protein, while the 4 small subunits are PetG, PetL, PetM and PetN. The complex functions as a dimer.

It is found in the plastid. It localises to the chloroplast thylakoid membrane. In terms of biological role, component of the cytochrome b6-f complex, which mediates electron transfer between photosystem II (PSII) and photosystem I (PSI), cyclic electron flow around PSI, and state transitions. PetG is required for either the stability or assembly of the cytochrome b6-f complex. This Solanum lycopersicum (Tomato) protein is Cytochrome b6-f complex subunit 5.